Reading from the N-terminus, the 512-residue chain is Multidrug resistance protein 3 (512 aa).

The next 14 helical transmembrane spans lie at 13 to 33, 48 to 68, 79 to 99, 109 to 129, 139 to 159, 163 to 183, 200 to 220, 228 to 248, 272 to 292, 304 to 324, 333 to 353, 358 to 378, 399 to 421, and 475 to 495; these read FVVLGLLLGILMSAMDNTIVA, KFAWVTASYMVAVMAGMPIYG, FFLFGLIFFLIGSALCGIAQT, IQGIGGGALLPIAFTIIFDLF, GMFGAVFGLSSVLGPLLGAII, ISWHWVFYINVPIGALSLFFI, WGGAITLVVSIVCLMFALELG, SIQIIGLFIVFAVFFIAFFIV, ILAFLYGGTFIILAVFIPIFV, GFILTPMMIGSVIGSMIGGIF, LMLISVIAFFIGMLLLSNMTP, VWLTVFMMISGFGVGFNFSLL, SFLRSFGMTLGVTIFGTVQTNVF, and ITYVFLLALIPIVLAAVTILF.

Belongs to the major facilitator superfamily. EmrB family.

It is found in the cell membrane. In terms of biological role, confers resistance to puromycin, tosufloxacin and norfloxacin. This is Multidrug resistance protein 3 (bmr3) from Bacillus subtilis (strain 168).